Consider the following 207-residue polypeptide: Phosphoserine phosphatase (207 aa).

Aspartate 8 serves as the catalytic Nucleophile. Residues aspartate 8 and aspartate 10 each contribute to the Mg(2+) site. The active-site Proton donor is aspartate 10. Residues glutamate 17, arginine 53, serine 96–glycine 97, and lysine 141 contribute to the substrate site. Aspartate 164 provides a ligand contact to Mg(2+). Asparagine 167 contacts substrate.

This sequence belongs to the HAD-like hydrolase superfamily. SerB family. Requires Mg(2+) as cofactor.

The catalysed reaction is O-phospho-L-serine + H2O = L-serine + phosphate. The enzyme catalyses O-phospho-D-serine + H2O = D-serine + phosphate. Its pathway is amino-acid biosynthesis; L-serine biosynthesis; L-serine from 3-phospho-D-glycerate: step 3/3. The protein is Phosphoserine phosphatase of Campylobacter jejuni subsp. doylei (strain ATCC BAA-1458 / RM4099 / 269.97).